A 938-amino-acid polypeptide reads, in one-letter code: MVGSVVEAHRQSVGCLRNLSQLLAWASNTSGGLIFYSREDDVLTSTRISYAELLADAGEKARLIGQITGLSSESIILLHFDTQREVIEWFWAATLAGYLPAISTPFVDDTARRKAHLLHLHAQLNQPVVLTSKRLVPEFLGLEELRLHDVESLLSSAAKDGLIQYLGVQKLAEDVAVLMLTSGSTGSAKAVPLRHGQLLTAIQGKSTHHGTLPGDVFYNWVGLDHVASLTEIHLHALILGSDQVHTAASELLRNSLQFVRLLDTHKVAYTFAPNFFLTKVLDSLRENPTFTADLSSLKALISGGESNVVVTCDKLTRELRRRGVQAEVIRPGFGMTETCAGSIYSRACPSYDIRQSLEFASLGSCIPGMHMRIMSITEPGKLAAPGESGELQVAGPVVFDHYYNDETATRNAFTPDGWFITGDLGWIDDAGNLNLAGRTKDTIIVNGVKWSSTELEAAIEEEAVSGLVRSFTVVVPTRPPGSATEEIAVVYSPAYAPEDYHARYETAQVISKTVSLLTGTKPARLIPLPQSLLEKSSLGKISHSKVRAALESGEYASIERADQLILAQYRQFKWRPAKSDSERAVQKALVEFLQVPAEGINMDDSIYDLGVSSLNLILLRSTLQRMLDPKIDIPLSIILNNPTPGAIARSIDSSRSSLAGYNAIVPLQQHRHGGTPLFCIHPGSGEVLVFVALAAHFPTRPVYALRTRGYGSNEQLFGSIEETVETYATQIRQVQPHGPYAIAGYSLGSTLAFEVAKVLEAQGEEVKFLASIDYPPHIAHYVRDLNWTDVLLHIAFFLELIDEKTMVEVTPYLHTLDRQTALTHILNIGDAERARALAIDTKHLGLISDIAENFRVNVKTYKPQGKVQHLDVFVADPPTYAARDRKDWRENKLGRWVDFCETKVEFHDCPGIHAKMLNREHIAGFAKVFKAAMRRRGV.

Residues 44 to 445 (TSTRISYAEL…AGRTKDTIIV (402 aa)) are adenylation (A) domain. One can recognise a Carrier domain in the interval 579–655 (SDSERAVQKA…AIARSIDSSR (77 aa)). Residues 581–652 (SERAVQKALV…TPGAIARSID (72 aa)) are thiolation and peptide carrier (T) domain. Residue Ser613 is modified to O-(pantetheine 4'-phosphoryl)serine. The tract at residues 676 to 923 (PLFCIHPGSG…AKMLNREHIA (248 aa)) is thioesterase (TE) domain. Ser746 is an active-site residue.

Belongs to the ATP-dependent AMP-binding enzyme family.

The protein operates within secondary metabolite biosynthesis. Microperfuranone synthase is the only protein required for the biosynthesis of the secondary metabolite microperfuranone from phenylpyruvic acid (PPA). Several steps for the microperfuranione biosynthesis have been proposed. These steps include the activation of PPA, by the micA adenylation (A) domain to AMP-phenylpyruvic acid followed by loading of the PPA unit to the thiolation and peptide carrier (T) domain and eventually transferring to the thioesterase (TE) domain. After loading another PPA unit onto the T domain, aldol condensation establishes the carbon-carbon bond between the alpha- and beta-carbon of the two PPA units. Sulfur-assisted furan ring formation, TE domain mediated hydrolysis, decarboxylation, and keto-enol tautomerization would generate microperfuranone attached to the T domain. Finally, microperfuranone is released by the TE domain. This Emericella nidulans (strain FGSC A4 / ATCC 38163 / CBS 112.46 / NRRL 194 / M139) (Aspergillus nidulans) protein is Microperfuranone synthase.